Reading from the N-terminus, the 111-residue chain is Large ribosomal subunit protein uL22 (111 aa).

It belongs to the universal ribosomal protein uL22 family. As to quaternary structure, part of the 50S ribosomal subunit.

Its function is as follows. This protein binds specifically to 23S rRNA; its binding is stimulated by other ribosomal proteins, e.g. L4, L17, and L20. It is important during the early stages of 50S assembly. It makes multiple contacts with different domains of the 23S rRNA in the assembled 50S subunit and ribosome. The globular domain of the protein is located near the polypeptide exit tunnel on the outside of the subunit, while an extended beta-hairpin is found that lines the wall of the exit tunnel in the center of the 70S ribosome. The sequence is that of Large ribosomal subunit protein uL22 from Chlamydia trachomatis serovar L2 (strain ATCC VR-902B / DSM 19102 / 434/Bu).